A 110-amino-acid polypeptide reads, in one-letter code: Keratin, type I cytoskeletal 19 (110 aa).

The interval 1–8 (FGSGGVFR) is head. Phosphoserine is present on serine 3. The IF rod domain maps to 7–110 (FRITMQNLND…KLEQEIATYR (104 aa)). The residue at position 8 (arginine 8) is an Omega-N-methylarginine. The coil 1A stretch occupies residues 9–42 (ITMQNLNDRLASYLDKVRALEQANGELEVKIRDW). The interval 43 to 45 (YQK) is linker 1. The interval 46–83 (IVLQIDNARTKFETEQALRVLDELTLARKNHEEEISAL) is coil 1B. The tract at residues 85–110 (ADTERQNQEYQQLMDIKLEQEIATYR) is coil 2. The tract at residues 85–110 (ADTERQNQEYQQLMDIKLEQEIATYR) is necessary for interaction with PNN.

The protein belongs to the intermediate filament family. In terms of assembly, heterotetramer of two type I and two type II keratins. Interacts with PNN and the actin-binding domain of DMD.

In terms of biological role, involved in the organization of myofibers. Together with KRT8, helps to link the contractile apparatus to dystrophin at the costameres of striated muscle. This Mesocricetus auratus (Golden hamster) protein is Keratin, type I cytoskeletal 19.